The sequence spans 209 residues: Ribosomal RNA large subunit methyltransferase E (209 aa).

S-adenosyl-L-methionine is bound by residues G63, W65, D83, D99, and D124. Residue K164 is the Proton acceptor of the active site.

The protein belongs to the class I-like SAM-binding methyltransferase superfamily. RNA methyltransferase RlmE family.

It localises to the cytoplasm. The enzyme catalyses uridine(2552) in 23S rRNA + S-adenosyl-L-methionine = 2'-O-methyluridine(2552) in 23S rRNA + S-adenosyl-L-homocysteine + H(+). Its function is as follows. Specifically methylates the uridine in position 2552 of 23S rRNA at the 2'-O position of the ribose in the fully assembled 50S ribosomal subunit. This chain is Ribosomal RNA large subunit methyltransferase E, found in Buchnera aphidicola subsp. Cinara cedri (strain Cc).